Consider the following 406-residue polypeptide: Accessory Sec system protein translocase subunit SecY2 (406 aa).

10 helical membrane passes run 14-34 (SWTV…LPFI), 63-83 (FSLF…WQMF), 108-128 (FAIA…EVGI), 131-151 (GLAI…LVWL), 156-176 (SFFG…ANLP), 190-210 (LPII…AVIV), 246-266 (FMYA…IQIL), 285-305 (PIWL…FAFV), 344-364 (AVIG…IVLI), and 368-388 (YLQL…VYNV).

The protein belongs to the SecY/SEC61-alpha family. SecY2 subfamily. As to quaternary structure, component of the accessory SecA2/SecY2 protein translocase complex required to export cell wall proteins. May form heterotrimers with SecE and SecG subunits.

It is found in the cell membrane. Functionally, part of the accessory SecA2/SecY2 system specifically required for export of possible cell wall proteins. The central subunit of a protein translocation channel. This chain is Accessory Sec system protein translocase subunit SecY2, found in Streptococcus salivarius (strain CCHSS3).